Consider the following 710-residue polypeptide: Solute carrier organic anion transporter family member 3A1 (710 aa).

Met-1 carries the N-acetylmethionine modification. The segment covering 1 to 15 has biased composition (gly residues); that stretch reads MQGKKPGGSSGGGRS. A disordered region spans residues 1–25; the sequence is MQGKKPGGSSGGGRSGELQGDEAQR. Residues 1–40 are Cytoplasmic-facing; sequence MQGKKPGGSSGGGRSGELQGDEAQRNKKKKKKVSCFSNIK. Residues 41–60 form a helical membrane-spanning segment; that stretch reads IFLVSECALMLAQGTVGAYL. Residues 61 to 79 lie on the Extracellular side of the membrane; sequence VSVLTTLERRFNLQSADVG. The helical transmembrane segment at 80 to 100 threads the bilayer; sequence VIASSFEIGNLALILFVSYFG. At 101 to 106 the chain is on the cytoplasmic side; it reads ARGHRP. Residues 107 to 131 traverse the membrane as a helical segment; it reads RLIGCGGIVMALGALLSALPEFLTH. Over 132–174 the chain is Extracellular; the sequence is QYKYEAGEIRWGAEGRDVCAANGSGGDEGPDPDLICRNRTATN. Asn-153 and Asn-169 each carry an N-linked (GlcNAc...) asparagine glycan. Residues 175–203 traverse the membrane as a helical segment; sequence MMYLLLIGAQVLLGIGATPVQPLGVSYID. Residues 204–222 are Cytoplasmic-facing; it reads DHVRRKDSSLYIGILFTML. A helical transmembrane segment spans residues 223–243; it reads VFGPACGFILGSFCTKIYVDA. At 244-261 the chain is on the extracellular side; sequence VFIDTSNLDITPDDPRWI. Residues 262-286 form a helical membrane-spanning segment; that stretch reads GAWWGGFLLCGALLFFSSLLMFGFP. Residues 287–344 are Cytoplasmic-facing; that stretch reads QSLPPHSEPAMESEQAMLSEREYERPKPSNGVLRHPLEPDSSASCFQQLRVIPKVTKH. A helical membrane pass occupies residues 345 to 366; the sequence is LLSNPVFTCIILAACMEIAVVA. At 367–386 the chain is on the extracellular side; sequence GFAAFLGKYLEQQFNLTTSS. Residue Asn-381 is glycosylated (N-linked (GlcNAc...) asparagine). The helical transmembrane segment at 387-410 threads the bilayer; it reads ANQLLGMTAIPCACLGIFLGGLLV. Over 411-414 the chain is Cytoplasmic; sequence KKLS. Residues 415-438 traverse the membrane as a helical segment; the sequence is LSALGAIRMAMLVNLVSTACYVSF. The Extracellular segment spans residues 439-539; that stretch reads LFLGCDTGPV…PGCQEAFLTF (101 aa). The N-linked (GlcNAc...) asparagine glycan is linked to Asn-457. Residues 465–513 form the Kazal-like domain; the sequence is LDPYSPCNNNCECQTDSFTPVCGADGITYLSACFAGCNSTNLTGCACLT. 3 disulfides stabilise this stretch: Cys-471–Cys-501, Cys-477–Cys-497, and Cys-486–Cys-511. Asn-502, Asn-505, and Asn-519 each carry an N-linked (GlcNAc...) asparagine glycan. The chain crosses the membrane as a helical span at residues 540–562; the sequence is LCVMCICSLIGAMAQTPSVIILI. The Cytoplasmic segment spans residues 563-571; sequence RTVSPELKS. Residues 572–597 form a helical membrane-spanning segment; it reads YALGVLFLLLRLLGFIPPPLIFGAGI. Residues 598 to 630 are Extracellular-facing; it reads DSTCLFWSTFCGEQGACVLYDNVVYRYLYVSIA. A helical transmembrane segment spans residues 631-648; the sequence is IALKSFAFILYTTTWQCL. The Cytoplasmic portion of the chain corresponds to 649–705; that stretch reads RKNYKRYIKNHEGGLSTSEFFASTLTLDNLGRDPVPANQTHRTKFIYNLEDHEWCEN.

Belongs to the organo anion transporter (TC 2.A.60) family. Generally the expression of isoform 1 is higher than that of isoform 2. In terms of tissue distribution, expressed in placental trophoblasts. Expressed in pancreas, kidney, liver, lung, brain, heart, cerebellum, peripheral blood leukocyte, colon, small intestine, ovary, testis, prostate, thyroid, thymus and spleen. Expressed in fetal brain, heart, kidney, liver, lung, skeletal muscle, spleen and pancreas. In testis, detected in spermatogonia at different stages and absent from Sertoli cells. Expressed in the choroid plexus epithelium, at the basolateral membrane. In brain, also very abundant in the gray matter of the frontal cortex, but not associated with neuronal cell bodies. Not detected in the white matter. As to expression, expressed in heart, brain, cerebellum, testis, lung, thyroid, spoleen and liver. In testis, primarily localized to the basal membrane of Sertoli cells and weakly expressed within the tubules. In testis, also present in spermatogonia at different stages. In brain, expressed in the choroid plexus epithelium, at the apical membrane as well as in the subapical intracellular vesicular compartments. In brain, also associated with neuronal bodies and axons in both the gray and the white matters of the frontal cortex.

It is found in the basolateral cell membrane. It localises to the apical cell membrane. Its subcellular location is the basal cell membrane. It carries out the reaction L-thyroxine(out) = L-thyroxine(in). It catalyses the reaction prostaglandin E1(out) = prostaglandin E1(in). The catalysed reaction is prostaglandin E2(out) = prostaglandin E2(in). The enzyme catalyses prostaglandin F2alpha(out) = prostaglandin F2alpha(in). It carries out the reaction (5Z,8Z,11Z,14Z)-eicosatetraenoate(out) = (5Z,8Z,11Z,14Z)-eicosatetraenoate(in). It catalyses the reaction taurocholate(out) = taurocholate(in). The catalysed reaction is glycocholate(out) = glycocholate(in). The enzyme catalyses estrone 3-sulfate(out) = estrone 3-sulfate(in). It carries out the reaction argipressin(out) = argipressin(in). Its activity is regulated as follows. Stimulated by extracellular acidic pH. In terms of biological role, putative organic anion antiporter with apparent broad substrate specificity. Recognizes various substrates including thyroid hormone L-thyroxine, prostanoids such as prostaglandin E1 and E2, bile acids such as taurocholate, glycolate and glycochenodeoxycholate and peptide hormones such as L-arginine vasopressin, likely operating in a tissue-specific manner. The transport mechanism, its electrogenicity and potential tissue-specific counterions remain to be elucidated. The polypeptide is Solute carrier organic anion transporter family member 3A1 (SLCO3A1) (Homo sapiens (Human)).